A 511-amino-acid chain; its full sequence is MVGFRRGPRAPLRATSSLSLRWRVMLLAMSMVAMVVVLMSFAVYAVISAALYSDIDNQLQSRAQLLIASGSLAADPGKAIEGTAYSDVNAMLVNPGRSIYTANQPGQTLPVGAPEKAVIHGDLFLSRRTVSDQRVLAIHLPNGSSLLISKSLKPTEAVMTKLRAVLLIVGGVGVAVAAVAGGMVTRAGLRPVGRLTEAAERVARTDDLRPIPVFGSDELARLTEAFNLMLRALAESRERQARLVSDAGHELRTPLTSLRTNVELLMASMEPGAPRLPEQEMVGLREDVVAQIEELSTLVGDLVDLTRGDAGVVVHEPVDMAEVVDRSLERVRRRRNDIHFDVDVVGWQVYGDAAGLSRAALNLMDNAAKWSPPGGRVGIRLRQLDPSHAELVVSDNGPGISPQERRLVFERFYRSTSARAMPGSGLGLAIVKQVVLNHGGSLRIEDTVPGGQPPGTAICMLLPGRPMPDSAYPAAPDDKKTEPVDTRGANGANSRGSANVISVDSQSARAR.

At 1-26 (MVGFRRGPRAPLRATSSLSLRWRVML) the chain is on the cytoplasmic side. The chain crosses the membrane as a helical span at residues 27 to 47 (LAMSMVAMVVVLMSFAVYAVI). The Extracellular portion of the chain corresponds to 48–163 (SAALYSDIDN…PTEAVMTKLR (116 aa)). The helical transmembrane segment at 164-184 (AVLLIVGGVGVAVAAVAGGMV) threads the bilayer. Residues 185–511 (TRAGLRPVGR…SVDSQSARAR (327 aa)) are Cytoplasmic-facing. The HAMP domain maps to 186–238 (RAGLRPVGRLTEAAERVARTDDLRPIPVFGSDELARLTEAFNLMLRALAESRE). The region spanning 246-466 (DAGHELRTPL…AICMLLPGRP (221 aa)) is the Histidine kinase domain. A Phosphohistidine; by autocatalysis modification is found at His249. The segment at 468–511 (PDSAYPAAPDDKKTEPVDTRGANGANSRGSANVISVDSQSARAR) is disordered. The span at 476–485 (PDDKKTEPVD) shows a compositional bias: basic and acidic residues. The span at 491–511 (GANSRGSANVISVDSQSARAR) shows a compositional bias: polar residues.

It depends on Mg(2+) as a cofactor. Mn(2+) serves as cofactor. Autophosphorylated.

It is found in the cell membrane. It carries out the reaction ATP + protein L-histidine = ADP + protein N-phospho-L-histidine.. Functionally, member of the two-component regulatory system MprB/MprA which contributes to maintaining a balance among several systems involved in stress resistance and is required for establishment and maintenance of persistent infection in the host. In response to environmental signals MprB acts both as a membrane-associated protein kinase that undergoes autophosphorylation and subsequently transfers the phosphate to MprA, and a protein phosphatase that dephosphorylates phospho-MprA. The sequence is that of Signal transduction histidine-protein kinase/phosphatase MprB (mprB) from Mycobacterium ulcerans (strain Agy99).